The following is a 276-amino-acid chain: Release factor glutamine methyltransferase (276 aa).

Residues 117–121 (GTGTG), aspartate 140, tryptophan 168, and asparagine 182 contribute to the S-adenosyl-L-methionine site. A substrate-binding site is contributed by 182–185 (NPPY).

Belongs to the protein N5-glutamine methyltransferase family. PrmC subfamily.

The enzyme catalyses L-glutaminyl-[peptide chain release factor] + S-adenosyl-L-methionine = N(5)-methyl-L-glutaminyl-[peptide chain release factor] + S-adenosyl-L-homocysteine + H(+). Its function is as follows. Methylates the class 1 translation termination release factors RF1/PrfA and RF2/PrfB on the glutamine residue of the universally conserved GGQ motif. The sequence is that of Release factor glutamine methyltransferase from Yersinia pestis.